The following is a 255-amino-acid chain: H-2 class II histocompatibility antigen, E-K alpha chain (255 aa).

Positions 1–25 are cleaved as a signal peptide; it reads MATIGALVLRFFFIAVLMSSQKSWA. An alpha-1 region spans residues 26 to 109; the sequence is IKEEHTIIQA…ERSNNTPDAN (84 aa). Topologically, residues 26–216 are extracellular; sequence IKEEHTIIQA…EKTLLPETKE (191 aa). An alpha-2 region spans residues 110–203; the sequence is VAPEVTVLSR…GLEEPLRKHW (94 aa). The 93-residue stretch at 112-204 folds into the Ig-like C1-type domain; sequence PEVTVLSRSP…LEEPLRKHWE (93 aa). Residues C132 and C188 are joined by a disulfide bond. A glycan (N-linked (GlcNAc...) asparagine) is linked at N143. Positions 204–216 are connecting peptide; sequence EFEEKTLLPETKE. A helical transmembrane segment spans residues 217-242; it reads NVVCALGLFVGLVGIVVGIILIMKGI. At 243-255 the chain is on the cytoplasmic side; that stretch reads KKRNVVERRQGAL.

The protein belongs to the MHC class II family.

It localises to the membrane. The chain is H-2 class II histocompatibility antigen, E-K alpha chain from Mus musculus (Mouse).